The primary structure comprises 185 residues: Intraflagellar transport protein 22 homolog (185 aa).

Residues 10 to 17, 63 to 67, and 123 to 126 contribute to the GTP site; these read GPCESGKT, DCGGD, and HKPG. At serine 137 the chain carries Phosphoserine.

The protein belongs to the small GTPase superfamily. Rab family. As to quaternary structure, component of the IFT complex B, at least composed of IFT20, IFT22, IFT25, IFT27, IFT46, IFT52, TRAF3IP1/IFT54, IFT57, IFT74, IFT80, IFT81, and IFT88. Interacts with IFT88. Interacts with CFAP61.

The protein localises to the cell projection. The protein resides in the cilium. In terms of biological role, small GTPase-like component of the intraflagellar transport (IFT) complex B. The polypeptide is Intraflagellar transport protein 22 homolog (Ift22) (Rattus norvegicus (Rat)).